Consider the following 71-residue polypeptide: Conotoxin Bu24 (71 aa).

Residues 1–21 (MGMRMMVTVFLLVVLATTVVS) form the signal peptide. Positions 22-44 (LRSNRASDGRRGIVNKLNDLVPK) are excised as a propeptide. Asparagine 70 is subject to Asparagine amide.

It belongs to the conotoxin A superfamily. Post-translationally, contains 3 disulfide bonds. They are not indicated here, since framework IV presents two different connectivities (I-V, II-III, IV-VI and I-III, II-V, IV-VI). Expressed by the venom duct.

It is found in the secreted. In Conus bullatus (Bubble cone), this protein is Conotoxin Bu24.